Here is a 709-residue protein sequence, read N- to C-terminus: UvrABC system protein B (709 aa).

The 382-residue stretch at 35–416 folds into the Helicase ATP-binding domain; the sequence is ERVEAGEKDV…YELGQADGYV (382 aa). ATP is bound at residue 48 to 55; the sequence is GATGTGKS. A Beta-hairpin motif is present at residues 101-124; sequence YYDYYQPEAYVPQTDTFIEKDSSI. One can recognise a Helicase C-terminal domain in the interval 438-604; it reads QIDDLLEQIR…PLRKRIADIT (167 aa). In terms of domain architecture, UVR spans 666 to 701; it reads ADLIEQMSQQMHQAAADLQFELAARLRDEVGELKKE.

It belongs to the UvrB family. In terms of assembly, forms a heterotetramer with UvrA during the search for lesions. Interacts with UvrC in an incision complex.

Its subcellular location is the cytoplasm. Functionally, the UvrABC repair system catalyzes the recognition and processing of DNA lesions. A damage recognition complex composed of 2 UvrA and 2 UvrB subunits scans DNA for abnormalities. Upon binding of the UvrA(2)B(2) complex to a putative damaged site, the DNA wraps around one UvrB monomer. DNA wrap is dependent on ATP binding by UvrB and probably causes local melting of the DNA helix, facilitating insertion of UvrB beta-hairpin between the DNA strands. Then UvrB probes one DNA strand for the presence of a lesion. If a lesion is found the UvrA subunits dissociate and the UvrB-DNA preincision complex is formed. This complex is subsequently bound by UvrC and the second UvrB is released. If no lesion is found, the DNA wraps around the other UvrB subunit that will check the other stand for damage. The polypeptide is UvrABC system protein B (Micrococcus luteus (strain ATCC 4698 / DSM 20030 / JCM 1464 / CCM 169 / CCUG 5858 / IAM 1056 / NBRC 3333 / NCIMB 9278 / NCTC 2665 / VKM Ac-2230) (Micrococcus lysodeikticus)).